The chain runs to 411 residues: Adenylosuccinate synthetase (411 aa).

GTP contacts are provided by residues 11 to 17 (GDEGKGK) and 39 to 41 (GHT). Catalysis depends on D12, which acts as the Proton acceptor. Mg(2+) contacts are provided by D12 and G39. IMP contacts are provided by residues 12 to 15 (DEGK), 37 to 40 (NAGH), T121, R135, Q215, T230, and R294. H40 (proton donor) is an active-site residue. Residue 290-296 (TTTKRPR) coordinates substrate. GTP is bound by residues R296, 322-324 (KLD), and 400-402 (STS).

This sequence belongs to the adenylosuccinate synthetase family. As to quaternary structure, homodimer. Mg(2+) serves as cofactor.

It is found in the cytoplasm. The catalysed reaction is IMP + L-aspartate + GTP = N(6)-(1,2-dicarboxyethyl)-AMP + GDP + phosphate + 2 H(+). Its pathway is purine metabolism; AMP biosynthesis via de novo pathway; AMP from IMP: step 1/2. Functionally, plays an important role in the de novo pathway of purine nucleotide biosynthesis. Catalyzes the first committed step in the biosynthesis of AMP from IMP. The sequence is that of Adenylosuccinate synthetase from Helicobacter pylori (strain P12).